A 37-amino-acid polypeptide reads, in one-letter code: Large ribosomal subunit protein bL36c (37 aa).

This sequence belongs to the bacterial ribosomal protein bL36 family.

The protein localises to the plastid. Its subcellular location is the chloroplast. The polypeptide is Large ribosomal subunit protein bL36c (Gracilaria tenuistipitata var. liui (Red alga)).